A 322-amino-acid chain; its full sequence is Probable L-asparaginase (322 aa).

The 315-residue stretch at 6–320 (PRLALIHTGG…EDIRRVFTQG (315 aa)) folds into the Asparaginase/glutaminase domain. The tract at residues 13–37 (TGGTIASRPSPDGRGLTPQTPPALP) is disordered. Residue Thr-16 is the O-isoaspartyl threonine intermediate of the active site. Substrate is bound by residues Ser-54 and 85-86 (TD).

This sequence belongs to the asparaginase 1 family.

Its subcellular location is the cytoplasm. It carries out the reaction L-asparagine + H2O = L-aspartate + NH4(+). This chain is Probable L-asparaginase (ansA), found in Deinococcus radiodurans (strain ATCC 13939 / DSM 20539 / JCM 16871 / CCUG 27074 / LMG 4051 / NBRC 15346 / NCIMB 9279 / VKM B-1422 / R1).